The primary structure comprises 196 residues: Beta-crystallin A4 (196 aa).

Thr-2 is subject to N-acetylthreonine. The interval 2-11 is N-terminal arm; sequence TLQCTKSAGP. Beta/gamma crystallin 'Greek key' domains lie at 12 to 51 and 52 to 98; these read WKMV…KVLS and GAWV…RPAA. The segment at 99–104 is connecting peptide; the sequence is CANHRD. Beta/gamma crystallin 'Greek key' domains lie at 105-146 and 147-195; these read SRLT…HVHS and GAWV…RRIQ.

This sequence belongs to the beta/gamma-crystallin family. In terms of assembly, homo/heterodimer, or complexes of higher-order. The structure of beta-crystallin oligomers seems to be stabilized through interactions between the N-terminal arms.

Crystallins are the dominant structural components of the vertebrate eye lens. This is Beta-crystallin A4 (CRYBA4) from Homo sapiens (Human).